A 631-amino-acid polypeptide reads, in one-letter code: Phosphomethylpyrimidine synthase (631 aa).

Substrate-binding positions include Asn-239, Met-268, Tyr-297, His-333, 353–355, 394–397, and Glu-433; these read SRG and DGLR. His-437 provides a ligand contact to Zn(2+). Tyr-460 contacts substrate. His-501 serves as a coordination point for Zn(2+). [4Fe-4S] cluster-binding residues include Cys-581, Cys-584, and Cys-589.

This sequence belongs to the ThiC family. Homodimer. It depends on [4Fe-4S] cluster as a cofactor.

It carries out the reaction 5-amino-1-(5-phospho-beta-D-ribosyl)imidazole + S-adenosyl-L-methionine = 4-amino-2-methyl-5-(phosphooxymethyl)pyrimidine + CO + 5'-deoxyadenosine + formate + L-methionine + 3 H(+). The protein operates within cofactor biosynthesis; thiamine diphosphate biosynthesis. Catalyzes the synthesis of the hydroxymethylpyrimidine phosphate (HMP-P) moiety of thiamine from aminoimidazole ribotide (AIR) in a radical S-adenosyl-L-methionine (SAM)-dependent reaction. The chain is Phosphomethylpyrimidine synthase from Salmonella typhi.